The following is a 201-amino-acid chain: CASP-like protein 1F2 (201 aa).

At 1–29 the chain is on the cytoplasmic side; the sequence is MITSIATTTAGAFEVKSLGFIPYPSQPKR. The helical transmembrane segment at 30–50 threads the bilayer; sequence IFFMAQVIFRILAIAFAVASI. Topologically, residues 51–78 are extracellular; that stretch reads SAMVTSDQNVIVFGMDTAARYSYSSAFR. A helical transmembrane segment spans residues 79–99; that stretch reads FLVGANAVVCGFSVLSLIFVC. The Cytoplasmic portion of the chain corresponds to 100 to 119; sequence LMSRRSEAILEKNYYLFLHD. Residues 120 to 140 form a helical membrane-spanning segment; that stretch reads MVMMVMMVSGCSAATAIGYVG. Residues 141 to 162 lie on the Extracellular side of the membrane; sequence RYGEKEITWTAVCDFVGKFCNQ. A helical membrane pass occupies residues 163–183; that stretch reads ALVSIVLAYLALFCYVALTTL. The Cytoplasmic portion of the chain corresponds to 184 to 201; it reads AAHKLNHSSSTAAIRQNE.

This sequence belongs to the Casparian strip membrane proteins (CASP) family. As to quaternary structure, homodimer and heterodimers.

The protein localises to the cell membrane. The sequence is that of CASP-like protein 1F2 from Ricinus communis (Castor bean).